The primary structure comprises 616 residues: Chaperone protein HscA (616 aa).

This sequence belongs to the heat shock protein 70 family.

In terms of biological role, chaperone involved in the maturation of iron-sulfur cluster-containing proteins. Has a low intrinsic ATPase activity which is markedly stimulated by HscB. Involved in the maturation of IscU. This Cronobacter sakazakii (strain ATCC BAA-894) (Enterobacter sakazakii) protein is Chaperone protein HscA.